A 583-amino-acid chain; its full sequence is Pectinesterase/pectinesterase inhibitor U1 (583 aa).

Positions 1–40 (MTRVEDFFSKQIDFCKRKKKIYLAIVASVLLVAAVIGVVA) are cleaved as a signal peptide. The tract at residues 60–221 (SSAHAIVKSA…EKMCSNALAM (162 aa)) is pectinesterase inhibitor U1. Asn85, Asn105, and Asn224 each carry an N-linked (GlcNAc...) asparagine glycan. Residues 272 to 570 (DVVVAADGSG…TPGRFIAGGS (299 aa)) form a pectinesterase U1 region. Substrate is bound by residues Thr347 and Gln377. The Proton donor; for pectinesterase activity role is filled by Asp400. A disulfide bridge connects residues Cys414 and Cys434. The active-site Nucleophile; for pectinesterase activity is the Asp421. Residues Arg489 and Trp491 each contribute to the substrate site.

It in the N-terminal section; belongs to the PMEI family. The protein in the C-terminal section; belongs to the pectinesterase family.

It is found in the secreted. It localises to the cell wall. The catalysed reaction is [(1-&gt;4)-alpha-D-galacturonosyl methyl ester](n) + n H2O = [(1-&gt;4)-alpha-D-galacturonosyl](n) + n methanol + n H(+). It participates in glycan metabolism; pectin degradation; 2-dehydro-3-deoxy-D-gluconate from pectin: step 1/5. Its function is as follows. Acts in the modification of cell walls via demethylesterification of cell wall pectin. This Solanum lycopersicum (Tomato) protein is Pectinesterase/pectinesterase inhibitor U1 (PMEU1).